We begin with the raw amino-acid sequence, 278 residues long: Coiled-coil domain-containing protein 106 (278 aa).

Residues A61–R99 are a coiled coil. Residues A102–G119 are compositionally biased toward basic and acidic residues. Residues A102–V174 are disordered. S128 bears the Phosphoserine mark. Residues E131 to G144 are compositionally biased toward low complexity. Basic residues predominate over residues K150–P166. The Bipartite nuclear localization signal motif lies at R151–G164.

As to quaternary structure, interacts with p53/TP53.

It localises to the nucleus. Its function is as follows. Promotes the degradation of p53/TP53 protein and inhibits its transactivity. The polypeptide is Coiled-coil domain-containing protein 106 (CCDC106) (Bos taurus (Bovine)).